A 460-amino-acid chain; its full sequence is Cysteine--tRNA ligase (460 aa).

C27 provides a ligand contact to Zn(2+). Positions 29–39 (PTVYDDAHLGH) match the 'HIGH' region motif. Zn(2+) is bound by residues C202, H227, and E231. A 'KMSKS' region motif is present at residues 259–263 (KMSKS). K262 serves as a coordination point for ATP.

The protein belongs to the class-I aminoacyl-tRNA synthetase family. In terms of assembly, monomer. The cofactor is Zn(2+).

The protein resides in the cytoplasm. The catalysed reaction is tRNA(Cys) + L-cysteine + ATP = L-cysteinyl-tRNA(Cys) + AMP + diphosphate. This is Cysteine--tRNA ligase from Campylobacter lari (strain RM2100 / D67 / ATCC BAA-1060).